Consider the following 396-residue polypeptide: Decapping and exoribonuclease protein (396 aa).

Basic and acidic residues predominate over residues Met-1–Asn-20. Residues Met-1 to Ser-37 are disordered. Residues Arg-58, Glu-101, and Trp-131–Gly-133 contribute to the substrate site. Mg(2+) is bound at residue Glu-192. 2 residues coordinate substrate: Cys-217 and Glu-234. Mg(2+)-binding residues include Glu-234, Asp-236, Glu-253, and Leu-254. Residues Lys-255 and Gln-280 each contribute to the substrate site. At Thr-392 the chain carries Phosphothreonine. Ser-394 carries the post-translational modification Phosphoserine.

Belongs to the DXO/Dom3Z family. Requires Mg(2+) as cofactor. In terms of tissue distribution, ubiquitously expressed.

Its subcellular location is the nucleus. It carries out the reaction a 5'-end triphospho-ribonucleoside in mRNA + H2O = a 5'-end phospho-ribonucleoside in mRNA + diphosphate + H(+). It catalyses the reaction a 5'-end NAD(+)-phospho-ribonucleoside in mRNA + H2O = a 5'-end phospho-ribonucleoside in mRNA + NAD(+) + H(+). The catalysed reaction is a 5'-end NAD(+)-phospho-ribonucleoside in snoRNA + H2O = a 5'-end phospho-ribonucleoside in snoRNA + NAD(+) + H(+). The enzyme catalyses a 5'-end (N(7)-methyl 5'-triphosphoguanosine)-ribonucleoside-ribonucleotide in mRNA + H2O = a (N(7)-methyl 5'-triphosphoguanosine)-nucleoside + a 5'-end phospho-ribonucleoside in mRNA + H(+). It carries out the reaction a 5'-end FAD-phospho-ribonucleoside in mRNA + H2O = a 5'-end phospho-ribonucleoside in mRNA + FAD + H(+). It catalyses the reaction a 5'-end CoA-ribonucleoside in mRNA + H2O = 3'-dephospho-CoA + a 5'-end phospho-ribonucleoside in mRNA + H(+). Decapping enzyme for NAD-capped RNAs: specifically hydrolyzes the nicotinamide adenine dinucleotide (NAD) cap from a subset of RNAs by removing the entire NAD moiety from the 5'-end of an NAD-capped RNA. The NAD-cap is present at the 5'-end of some RNAs and snoRNAs. In contrast to the canonical 5'-end N7 methylguanosine (m7G) cap, the NAD cap promotes mRNA decay. Preferentially acts on NAD-capped transcripts in response to environmental stress. Also acts as a non-canonical decapping enzyme that removes the entire cap structure of m7G capped or incompletely capped RNAs and mediates their subsequent degradation. Specifically degrades pre-mRNAs with a defective 5'-end m7G cap and is part of a pre-mRNA capping quality control. Has decapping activity toward incomplete 5'-end m7G cap mRNAs such as unmethylated 5'-end-capped RNA (cap0), while it has no activity toward 2'-O-ribose methylated m7G cap (cap1). In contrast to canonical decapping enzymes DCP2 and NUDT16, which cleave the cap within the triphosphate linkage, the decapping activity releases the entire cap structure GpppN and a 5'-end monophosphate RNA. Also has 5'-3' exoribonuclease activities: The 5'-end monophosphate RNA is then degraded by the 5'-3' exoribonuclease activity, enabling this enzyme to decap and degrade incompletely capped mRNAs. Also possesses RNA 5'-pyrophosphohydrolase activity by hydrolyzing the 5'-end triphosphate to release pyrophosphates. Exhibits decapping activity towards FAD-capped RNAs. Exhibits decapping activity towards dpCoA-capped RNAs in vitro. The sequence is that of Decapping and exoribonuclease protein from Homo sapiens (Human).